The chain runs to 443 residues: Serine/threonine-protein phosphatase 2A 55 kDa regulatory subunit B beta isoform (443 aa).

4 WD repeats span residues 22–61 (TEAD…KNQV), 87–128 (EIEE…KRPE), 171–209 (AHTY…QSFN), and 220–260 (ELTE…CVTG). S275 is subject to Phosphoserine. 3 WD repeats span residues 279-317 (KLSS…RPIE), 334-375 (ENDC…DVTL), and 410-442 (DFSK…QDKV). Position 298 is a phosphothreonine (T298).

The protein belongs to the phosphatase 2A regulatory subunit B family. PP2A consists of a common heterodimeric core enzyme, composed of a 36 kDa catalytic subunit (subunit C) and a 65 kDa constant regulatory subunit (PR65 or subunit A), that associates with a variety of regulatory subunits. Proteins that associate with the core dimer include three families of regulatory subunits B (the R2/B/PR55/B55, R3/B''/PR72/PR130/PR59 and R5/B'/B56 families), the 48 kDa variable regulatory subunit, viral proteins, and cell signaling molecules. Interacts with TOMM22. Interacts with IER5 (via N- and C-terminal regions). Brain.

It is found in the cytoplasm. It localises to the cytoskeleton. The protein localises to the membrane. Its function is as follows. The B regulatory subunit might modulate substrate selectivity and catalytic activity, and might also direct the localization of the catalytic enzyme to a particular subcellular compartment. The chain is Serine/threonine-protein phosphatase 2A 55 kDa regulatory subunit B beta isoform (PPP2R2B) from Sus scrofa (Pig).